The sequence spans 339 residues: Dihydroorotase (339 aa).

Zn(2+) is bound by residues His12 and His14. Substrate-binding positions include 14–16 (HVR) and Asn40. Zn(2+) contacts are provided by Lys94, His133, His167, and Asp239. Residue Lys94 is modified to N6-carboxylysine. His133 lines the substrate pocket. Residue Asp239 is part of the active site. His243 and Ala255 together coordinate substrate.

The protein belongs to the metallo-dependent hydrolases superfamily. DHOase family. Class II DHOase subfamily. Homodimer. Requires Zn(2+) as cofactor.

The catalysed reaction is (S)-dihydroorotate + H2O = N-carbamoyl-L-aspartate + H(+). Its pathway is pyrimidine metabolism; UMP biosynthesis via de novo pathway; (S)-dihydroorotate from bicarbonate: step 3/3. Functionally, catalyzes the reversible cyclization of carbamoyl aspartate to dihydroorotate. This Helicobacter pylori (strain J99 / ATCC 700824) (Campylobacter pylori J99) protein is Dihydroorotase.